We begin with the raw amino-acid sequence, 465 residues long: Ribulose bisphosphate carboxylase large chain (465 aa).

Residue Lys4 is modified to N6,N6,N6-trimethyllysine. Substrate is bound by residues Asn113 and Thr163. Lys165 (proton acceptor) is an active-site residue. Lys167 provides a ligand contact to substrate. The Mg(2+) site is built by Lys191, Asp193, and Glu194. Lys191 is subject to N6-carboxylysine. The active-site Proton acceptor is the His284. Substrate contacts are provided by Arg285, His317, and Ser369.

It belongs to the RuBisCO large chain family. Type I subfamily. As to quaternary structure, heterohexadecamer of 8 large chains and 8 small chains; disulfide-linked. The disulfide link is formed within the large subunit homodimers. Mg(2+) is required as a cofactor. The disulfide bond which can form in the large chain dimeric partners within the hexadecamer appears to be associated with oxidative stress and protein turnover.

The protein localises to the plastid. It localises to the chloroplast. The catalysed reaction is 2 (2R)-3-phosphoglycerate + 2 H(+) = D-ribulose 1,5-bisphosphate + CO2 + H2O. It carries out the reaction D-ribulose 1,5-bisphosphate + O2 = 2-phosphoglycolate + (2R)-3-phosphoglycerate + 2 H(+). Functionally, ruBisCO catalyzes two reactions: the carboxylation of D-ribulose 1,5-bisphosphate, the primary event in carbon dioxide fixation, as well as the oxidative fragmentation of the pentose substrate in the photorespiration process. Both reactions occur simultaneously and in competition at the same active site. This chain is Ribulose bisphosphate carboxylase large chain, found in Eucommia ulmoides (Hardy rubber tree).